Reading from the N-terminus, the 184-residue chain is Ribulose bisphosphate carboxylase small subunit, chloroplastic 5 (184 aa).

The N-terminal 43 residues, Met-1–Arg-43, are a transit peptide targeting the chloroplast.

It belongs to the RuBisCO small chain family. Heterohexadecamer of 8 large and 8 small subunits.

The protein localises to the plastid. The protein resides in the chloroplast. In terms of biological role, ruBisCO catalyzes two reactions: the carboxylation of D-ribulose 1,5-bisphosphate, the primary event in carbon dioxide fixation, as well as the oxidative fragmentation of the pentose substrate. Both reactions occur simultaneously and in competition at the same active site. Although the small subunit is not catalytic it is essential for maximal activity. The chain is Ribulose bisphosphate carboxylase small subunit, chloroplastic 5 from Acetabularia peniculus (Green alga).